The primary structure comprises 523 residues: 2-isopropylmalate synthase (523 aa).

The 263-residue stretch at 5–267 folds into the Pyruvate carboxyltransferase domain; that stretch reads VIIFDTTLRD…HTNINHHEIW (263 aa). Residues Asp14, His202, His204, and Asn238 each coordinate Mn(2+). Residues 392-523 are regulatory domain; the sequence is RLDYFSVQSG…QNKENNKETV (132 aa).

Belongs to the alpha-IPM synthase/homocitrate synthase family. LeuA type 1 subfamily. Homodimer. It depends on Mn(2+) as a cofactor.

Its subcellular location is the cytoplasm. The enzyme catalyses 3-methyl-2-oxobutanoate + acetyl-CoA + H2O = (2S)-2-isopropylmalate + CoA + H(+). The protein operates within amino-acid biosynthesis; L-leucine biosynthesis; L-leucine from 3-methyl-2-oxobutanoate: step 1/4. Its function is as follows. Catalyzes the condensation of the acetyl group of acetyl-CoA with 3-methyl-2-oxobutanoate (2-ketoisovalerate) to form 3-carboxy-3-hydroxy-4-methylpentanoate (2-isopropylmalate). This Klebsiella pneumoniae (strain 342) protein is 2-isopropylmalate synthase.